We begin with the raw amino-acid sequence, 495 residues long: Serine/threonine-protein phosphatase 2A regulatory subunit sur-6 (495 aa).

The interval methionine 1–aspartate 27 is disordered. Residues alanine 12–glutamate 21 are compositionally biased toward polar residues. WD repeat units follow at residues threonine 64 to lysine 103, glutamate 130 to glycine 171, alanine 215 to asparagine 253, glutamate 264 to alanine 304, glutamate 323 to glutamate 361, and glutamate 378 to threonine 419. The tract at residues serine 439–serine 459 is disordered. The WD 7 repeat unit spans residues glutamine 464 to valine 495.

It belongs to the phosphatase 2A regulatory subunit B family. As to quaternary structure, part of a complex consisting of a common heterodimeric core enzyme, composed of catalytic subunit let-92 and constant regulatory subunit paa-1, that associates with a variety of regulatory subunits which confer distinct properties to the holoenzyme. Interacts with let-92.

It is found in the cytoplasm. Its function is as follows. Probable regulatory subunit of serine/threonine phosphatase let-92. Together with let-92 and constant regulatory subunit paa-1, positively regulates centriole duplication during early embryonic cell divisions by preventing the degradation of sas-5 and kinase zyg-1. In addition, during vulva development, may play a role with phosphatase let-92 and regulatory subunit paa-1 in the induction of vulva cell precursors by positively regulating let-60/Ras-MAP kinase signaling, probably by promoting lin-45 activation. In intestinal epithelial cells, may play a role in the late secretory pathway probably by regulating the exocyst, a protein complex involved in targeting secretory vesicles to the plasma membrane. The protein is Serine/threonine-protein phosphatase 2A regulatory subunit sur-6 of Caenorhabditis elegans.